A 330-amino-acid chain; its full sequence is Cyclin-dependent kinase 7 (330 aa).

The region spanning 5-289 (YDTIKHLGEG…CTQSLQMEYF (285 aa)) is the Protein kinase domain. ATP is bound by residues 11-19 (LGEGQFANV) and K34. D130 (proton acceptor) is an active-site residue. The residue at position 163 (T163) is a Phosphothreonine. Residues 305–330 (KKQQPQKRSRRLDDDGTRPVRRLNFD) are disordered. Over residues 315–330 (RLDDDGTRPVRRLNFD) the composition is skewed to basic and acidic residues.

The protein belongs to the protein kinase superfamily. CMGC Ser/Thr protein kinase family. CDC2/CDKX subfamily. In terms of assembly, catalytic component which, in association with cyclin H (cyh-1) and mat1, is likely to form the CAK complex.

The catalysed reaction is L-seryl-[protein] + ATP = O-phospho-L-seryl-[protein] + ADP + H(+). It catalyses the reaction L-threonyl-[protein] + ATP = O-phospho-L-threonyl-[protein] + ADP + H(+). It carries out the reaction [DNA-directed RNA polymerase] + ATP = phospho-[DNA-directed RNA polymerase] + ADP + H(+). Functionally, serine/threonine kinase involved in cell cycle control and in RNA polymerase II-mediated RNA transcription. Required for maintaining chromosome ploidy. May phosphorylate the large subunit of RNA polymerase II, ama-1. The protein is Cyclin-dependent kinase 7 of Caenorhabditis elegans.